A 317-amino-acid chain; its full sequence is Methionyl-tRNA formyltransferase (317 aa).

112-115 is a binding site for (6S)-5,6,7,8-tetrahydrofolate; that stretch reads SLLP.

The protein belongs to the Fmt family.

It catalyses the reaction L-methionyl-tRNA(fMet) + (6R)-10-formyltetrahydrofolate = N-formyl-L-methionyl-tRNA(fMet) + (6S)-5,6,7,8-tetrahydrofolate + H(+). In terms of biological role, attaches a formyl group to the free amino group of methionyl-tRNA(fMet). The formyl group appears to play a dual role in the initiator identity of N-formylmethionyl-tRNA by promoting its recognition by IF2 and preventing the misappropriation of this tRNA by the elongation apparatus. In Histophilus somni (strain 129Pt) (Haemophilus somnus), this protein is Methionyl-tRNA formyltransferase.